The chain runs to 506 residues: Aldehyde dehydrogenase [NAD(P)+] 2 (506 aa).

The Proton acceptor role is filled by Glu-268. The active-site Nucleophile is Cys-302.

The protein belongs to the aldehyde dehydrogenase family.

Its subcellular location is the cytoplasm. It carries out the reaction an aldehyde + NAD(+) + H2O = a carboxylate + NADH + 2 H(+). The catalysed reaction is 3-aminopropanal + NAD(+) + H2O = beta-alanine + NADH + 2 H(+). Its function is as follows. Cytoplasmic aldehyde dehydrogenase involved in ethanol oxidation. Involved in pantothenic acid production through the conversion of 3-aminopropanal to beta-alanine, an intermediate in pantothenic acid (vitamin B5) and coenzyme A (CoA) biosynthesis. In Saccharomyces cerevisiae (strain ATCC 204508 / S288c) (Baker's yeast), this protein is Aldehyde dehydrogenase [NAD(P)+] 2 (ALD3).